We begin with the raw amino-acid sequence, 212 residues long: Uridine kinase (212 aa).

Residue 13-20 (GGSGSGKT) participates in ATP binding.

It belongs to the uridine kinase family.

The protein resides in the cytoplasm. It catalyses the reaction uridine + ATP = UMP + ADP + H(+). The enzyme catalyses cytidine + ATP = CMP + ADP + H(+). It functions in the pathway pyrimidine metabolism; CTP biosynthesis via salvage pathway; CTP from cytidine: step 1/3. It participates in pyrimidine metabolism; UMP biosynthesis via salvage pathway; UMP from uridine: step 1/1. The chain is Uridine kinase from Bacillus cereus (strain ATCC 10987 / NRS 248).